The chain runs to 639 residues: CTTNBP2 N-terminal-like protein (639 aa).

Residues 87–285 (MKQCKNMQER…DLEASHQHSS (199 aa)) are a coiled coil. 2 positions are modified to phosphoserine: S284 and S285. Disordered regions lie at residues 387 to 430 (VENG…PCSS), 463 to 490 (RHKF…LSPT), and 511 to 609 (RFTS…AASL). 2 stretches are compositionally biased toward low complexity: residues 405–430 (PLSS…PCSS) and 467–477 (QSQADQDQQAS). Residues S481, S488, S523, S527, S560, S563, and S568 each carry the phosphoserine modification. The span at 511 to 529 (RFTSQQGPIKPVSPNSSPF) shows a compositional bias: polar residues. Phosphothreonine is present on residues T570 and T590. Positions 587–600 (PGLTPSPSATTPLT) are enriched in low complexity. S592 is subject to Phosphoserine.

As to quaternary structure, interacts with CTTN/cortactin; this interaction may redistribute CTTN to stress fibers. May form homomers. Associates with the core of STRIPAK complexes composed of PP2A catalytic and scaffolding subunits, the striatins (PP2A regulatory subunits), the striatin-associated proteins MOB4, STRIP1 and STRIP2, PDCD10 and members of the STE20 kinases, such as STK24 and STK26.

It localises to the cell projection. Its subcellular location is the lamellipodium. It is found in the cytoplasm. The protein localises to the cytoskeleton. The protein resides in the stress fiber. Regulates lamellipodial actin dynamics in a CTTN-dependent manner. Associates with core striatin-interacting phosphatase and kinase (STRIPAK) complex to form CTTNBP2NL-STRIPAK complexes. STRIPAK complexes have critical roles in protein (de)phosphorylation and are regulators of multiple signaling pathways including Hippo, MAPK, nuclear receptor and cytoskeleton remodeling. Different types of STRIPAK complexes are involved in a variety of biological processes such as cell growth, differentiation, apoptosis, metabolism and immune regulation. The protein is CTTNBP2 N-terminal-like protein of Homo sapiens (Human).